A 542-amino-acid chain; its full sequence is CTP synthase (542 aa).

An amidoligase domain region spans residues 1 to 265; it reads MTRYVFITGG…DREVLGHFGL (265 aa). Residue Ser13 coordinates CTP. Ser13 is a binding site for UTP. Residues 14 to 19 and Asp71 each bind ATP; that span reads SLGKGL. Residues Asp71 and Glu139 each contribute to the Mg(2+) site. Residues 146-148, 186-191, and Lys222 contribute to the CTP site; these read DIE and KTKPTQ. UTP is bound by residues 186–191 and Lys222; that span reads KTKPTQ. The Glutamine amidotransferase type-1 domain occupies 291–541; the sequence is SIAIVGKYTG…VGAAIEQSRL (251 aa). L-glutamine is bound at residue Gly353. Residue Cys380 is the Nucleophile; for glutamine hydrolysis of the active site. L-glutamine is bound by residues 381–384, Glu404, and Arg469; that span reads FGMQ. Catalysis depends on residues His514 and Glu516.

It belongs to the CTP synthase family. In terms of assembly, homotetramer.

The catalysed reaction is UTP + L-glutamine + ATP + H2O = CTP + L-glutamate + ADP + phosphate + 2 H(+). It catalyses the reaction L-glutamine + H2O = L-glutamate + NH4(+). It carries out the reaction UTP + NH4(+) + ATP = CTP + ADP + phosphate + 2 H(+). It participates in pyrimidine metabolism; CTP biosynthesis via de novo pathway; CTP from UDP: step 2/2. Allosterically activated by GTP, when glutamine is the substrate; GTP has no effect on the reaction when ammonia is the substrate. The allosteric effector GTP functions by stabilizing the protein conformation that binds the tetrahedral intermediate(s) formed during glutamine hydrolysis. Inhibited by the product CTP, via allosteric rather than competitive inhibition. In terms of biological role, catalyzes the ATP-dependent amination of UTP to CTP with either L-glutamine or ammonia as the source of nitrogen. Regulates intracellular CTP levels through interactions with the four ribonucleotide triphosphates. This chain is CTP synthase, found in Methylobacterium radiotolerans (strain ATCC 27329 / DSM 1819 / JCM 2831 / NBRC 15690 / NCIMB 10815 / 0-1).